A 127-amino-acid polypeptide reads, in one-letter code: Apolipoprotein C-IV (127 aa).

A signal peptide spans 1-27 (MSLLRNRLQDLPALCLCVLVLACIGAC).

Belongs to the apolipoprotein C4 family.

The protein localises to the secreted. Functionally, may participate in lipoprotein metabolism. This Papio anubis (Olive baboon) protein is Apolipoprotein C-IV (APOC4).